Reading from the N-terminus, the 434-residue chain is Alpha-enolase (434 aa).

Residue Ser40 participates in Mg(2+) binding. Substrate contacts are provided by His158 and Glu167. Glu210 serves as the catalytic Proton donor. Mg(2+) contacts are provided by Asp245, Glu293, and Asp318. Substrate is bound by residues Glu293, Asp318, 370-373, and Lys394; that span reads SHRS.

Belongs to the enolase family. As to quaternary structure, homodimer. Requires Mg(2+) as cofactor.

The protein resides in the cytoplasm. It catalyses the reaction (2R)-2-phosphoglycerate = phosphoenolpyruvate + H2O. It participates in carbohydrate degradation; glycolysis; pyruvate from D-glyceraldehyde 3-phosphate: step 4/5. This Trachemys scripta elegans (Red-eared slider turtle) protein is Alpha-enolase.